The sequence spans 164 residues: Cell division protein SepF (164 aa).

The interval 21-71 (YQQGQQPAQQQQSPVQAVPTPAPAPQQQAKRAPVTPLHKPSTTTRNAAPAE) is disordered. Over residues 22 to 54 (QQGQQPAQQQQSPVQAVPTPAPAPQQQAKRAPV) the composition is skewed to low complexity.

This sequence belongs to the SepF family. As to quaternary structure, homodimer. Interacts with FtsZ.

The protein resides in the cytoplasm. Cell division protein that is part of the divisome complex and is recruited early to the Z-ring. Probably stimulates Z-ring formation, perhaps through the cross-linking of FtsZ protofilaments. Its function overlaps with FtsA. In Clavibacter michiganensis subsp. michiganensis (strain NCPPB 382), this protein is Cell division protein SepF.